The primary structure comprises 863 residues: DNA mismatch repair protein MutS (863 aa).

615 to 622 (GPNMAGKS) provides a ligand contact to ATP.

Belongs to the DNA mismatch repair MutS family.

This protein is involved in the repair of mismatches in DNA. It is possible that it carries out the mismatch recognition step. This protein has a weak ATPase activity. The polypeptide is DNA mismatch repair protein MutS (Pelotomaculum thermopropionicum (strain DSM 13744 / JCM 10971 / SI)).